Reading from the N-terminus, the 845-residue chain is U-box domain-containing protein 52 (845 aa).

2 disordered regions span residues 180–210 (RPSESDASGSIRFERSSSTSGSTDSPRLPPE) and 229–258 (SPALKHSMGSNAVAQMDTSSSGTDQEEVST). A compositionally biased stretch (low complexity) spans 187-204 (SGSIRFERSSSTSGSTDS). Residues 236–251 (MGSNAVAQMDTSSSGT) are compositionally biased toward polar residues. The stretch at 351–468 (SITDNQVNLN…REKDKLQASL (118 aa)) forms a coiled coil. The 265-residue stretch at 490 to 754 (FAENLKIGIG…DLKDQIIPAL (265 aa)) folds into the Protein kinase domain. Residues 496 to 504 (IGIGAYGSV) and K517 each bind ATP. Residue D612 is the Proton acceptor of the active site. The U-box domain maps to 774–845 (GPPSHFICPL…AIMEWKSNKR (72 aa)).

Belongs to the protein kinase superfamily. Ser/Thr protein kinase family.

It catalyses the reaction L-seryl-[protein] + ATP = O-phospho-L-seryl-[protein] + ADP + H(+). The catalysed reaction is L-threonyl-[protein] + ATP = O-phospho-L-threonyl-[protein] + ADP + H(+). The enzyme catalyses S-ubiquitinyl-[E2 ubiquitin-conjugating enzyme]-L-cysteine + [acceptor protein]-L-lysine = [E2 ubiquitin-conjugating enzyme]-L-cysteine + N(6)-ubiquitinyl-[acceptor protein]-L-lysine.. The protein operates within protein modification; protein ubiquitination. Functions as an E3 ubiquitin ligase. This Arabidopsis thaliana (Mouse-ear cress) protein is U-box domain-containing protein 52 (PUB52).